We begin with the raw amino-acid sequence, 499 residues long: Sialic acid-binding Ig-like lectin 8 (499 aa).

Residues 1–16 (MLLLLLLLPLLWGTKG) form the signal peptide. Topologically, residues 17–363 (MEGDRQYGDG…RPVSQVTLAA (347 aa)) are extracellular. A carbohydrate is bound by residues Y23, 72–75 (RPYQ), R125, and 134–138 (SYKSQ). Positions 40–123 (GLCVHVPCSF…ARKRDKGSYF (84 aa)) constitute an Ig-like V-type domain. Cystine bridges form between C42/C181, C47/C107, and C175/C224. 2 consecutive Ig-like C2-type domains span residues 157-240 (PDIL…STVR) and 246-344 (PPWN…LSLS). The N-linked (GlcNAc...) asparagine glycan is linked to N172. N-linked (GlcNAc...) asparagine glycosylation is found at N249 and N267. Cysteines 283 and 328 form a disulfide. Residues 364–384 (VGGAGATALAFLSFCIIFIIV) form a helical membrane-spanning segment. The Cytoplasmic portion of the chain corresponds to 385-499 (RSCRKKSARP…HNPSSKEVRG (115 aa)). The tract at residues 410 to 443 (RGSASQGPLTESWKDGNPLKKPPPAVAPSSGEEG) is disordered. An ITIM motif motif is present at residues 445 to 450 (LHYATL). 2 disordered regions span residues 451–470 (SFHKVKPQDPQGQEATDSEY) and 478–499 (RETAETQACLRNHNPSSKEVRG). The short motif at 468–473 (SEYSEI) is the SLAM-like motif element.

This sequence belongs to the immunoglobulin superfamily. SIGLEC (sialic acid binding Ig-like lectin) family. As to expression, expressed specifically on blood cells namely basophil, mast cells and eosinophils.

Its subcellular location is the membrane. Functionally, putative adhesion molecule that mediates sialic-acid dependent binding to blood cells. Preferentially binds to alpha-2,3-linked sialic acid. Also binds to alpha-2,6-linked sialic acid. The sialic acid recognition site may be masked by cis interactions with sialic acids on the same cell surface. Recognizes simultaneously epitopes having a terminal N-acetylneuraminic acid (sialic acid) and an underlying 6-O-sulfated galactose. Preferentially binds to Gal-6-sulfated sialyl-Lewis X glycan epitopes. This chain is Sialic acid-binding Ig-like lectin 8 (SIGLEC8), found in Homo sapiens (Human).